The primary structure comprises 914 residues: Linoleate 13S-lipoxygenase 3-1, chloroplastic (914 aa).

Residues 1–83 (MALAKEIMGI…PEKAVRFKVR (83 aa)) constitute a chloroplast transit peptide. The PLAT domain occupies 96-218 (LKETIVKHLD…DHPGKRIFFS (123 aa)). In terms of domain architecture, Lipoxygenase spans 221–914 (PYLPDETPAG…CRGVPNSVSI (694 aa)). Residues His-574, His-579, His-765, Asn-769, and Ile-914 each coordinate Fe cation.

The protein belongs to the lipoxygenase family. Monomer. Requires Fe cation as cofactor. As to expression, expressed in roots and leaves. Detected in tubers and flower buds.

The protein localises to the plastid. The protein resides in the chloroplast stroma. It localises to the chloroplast thylakoid. It catalyses the reaction (9Z,12Z)-octadecadienoate + O2 = (13S)-hydroperoxy-(9Z,11E)-octadecadienoate. The enzyme catalyses (9Z,12Z,15Z)-octadecatrienoate + O2 = (13S)-hydroperoxy-(9Z,11E,15Z)-octadecatrienoate. Its pathway is lipid metabolism; oxylipin biosynthesis. Its function is as follows. Plant lipoxygenases may be involved in a number of diverse aspects of plant physiology including growth and development, pest resistance, and senescence or responses to wounding. Required for the regulation of wound-induced gene expression, but is not involved in the bulk production of jasmonate upon wounding. Catalyzes the hydroperoxidation of lipids containing a cis,cis-1,4-pentadiene structure. Linolenic acid is the preferred substrate, before linoleic and arachidonic acids. The chain is Linoleate 13S-lipoxygenase 3-1, chloroplastic (LOX3.1) from Solanum tuberosum (Potato).